The primary structure comprises 126 residues: Ribosome-binding factor A (126 aa).

The protein belongs to the RbfA family. In terms of assembly, monomer. Binds 30S ribosomal subunits, but not 50S ribosomal subunits or 70S ribosomes.

It localises to the cytoplasm. Functionally, one of several proteins that assist in the late maturation steps of the functional core of the 30S ribosomal subunit. Associates with free 30S ribosomal subunits (but not with 30S subunits that are part of 70S ribosomes or polysomes). Required for efficient processing of 16S rRNA. May interact with the 5'-terminal helix region of 16S rRNA. The polypeptide is Ribosome-binding factor A (Nitrosospira multiformis (strain ATCC 25196 / NCIMB 11849 / C 71)).